A 71-amino-acid chain; its full sequence is MEKKKESFENMLEKLETIVDSMDNGEITLEDSMKSYEEGIKLCNKLYKVLKDAEGKIKILENNKEEDFENS.

This sequence belongs to the XseB family. As to quaternary structure, heterooligomer composed of large and small subunits.

The protein localises to the cytoplasm. It catalyses the reaction Exonucleolytic cleavage in either 5'- to 3'- or 3'- to 5'-direction to yield nucleoside 5'-phosphates.. Bidirectionally degrades single-stranded DNA into large acid-insoluble oligonucleotides, which are then degraded further into small acid-soluble oligonucleotides. This Clostridium botulinum (strain ATCC 19397 / Type A) protein is Exodeoxyribonuclease 7 small subunit.